A 258-amino-acid polypeptide reads, in one-letter code: MLILVSPAKTLDYETPASTQTFTMPALLEHSEALIKVCRELTPADIASLMKVSDKIAGLNAARFAEWHRDFNLDNAKQALFAFRGDVYTGLDADTLSEGSLARAQQHLRILSGLYGLLRPLDLMQAYRLEMGTKLANDRGANLYQFWGDIVTQEVNKALAEQGDDILVNLASNEYFKSVKPKQIQGQVITPIFKDKKNGQYKVISFFAKKARGMMVRYMLDNKVSRYEELLKFDTAGYYYSEADSSVNEPVFLREEQA.

Belongs to the UPF0246 family.

The protein is UPF0246 protein Shew_1093 of Shewanella loihica (strain ATCC BAA-1088 / PV-4).